Reading from the N-terminus, the 222-residue chain is TPR repeat-containing protein BH2049 (222 aa).

TPR repeat units lie at residues 34–67 and 169–202; these read AEPL…NREH and PVGL…KEDK.

In Halalkalibacterium halodurans (strain ATCC BAA-125 / DSM 18197 / FERM 7344 / JCM 9153 / C-125) (Bacillus halodurans), this protein is TPR repeat-containing protein BH2049.